A 1056-amino-acid chain; its full sequence is Carbamoyl phosphate synthase large chain (1056 aa).

The interval 1–397 is carboxyphosphate synthetic domain; the sequence is MPRRTDIKKV…GFKKALRSID (397 aa). ATP is bound by residues Arg-127, Arg-167, Gly-173, Gly-174, Glu-206, Val-208, Glu-213, Gly-239, Val-240, His-241, Gln-282, and Glu-294. One can recognise an ATP-grasp 1 domain in the interval 131 to 323; that stretch reads KALMQKIGEP…IARVAAKIAI (193 aa). 3 residues coordinate Mg(2+): Gln-282, Glu-294, and Asn-296. Gln-282, Glu-294, and Asn-296 together coordinate Mn(2+). An oligomerization domain region spans residues 398–530; that stretch reads TDINTHTNHN…YSTHGVTTDI (133 aa). Residues 531–919 are carbamoyl phosphate synthetic domain; sequence IQNDKKKVLI…YKACISADNE (389 aa). One can recognise an ATP-grasp 2 domain in the interval 661–852; it reads SELLDALKIP…LAKVAAKVMI (192 aa). Residues Arg-697, Ser-736, Leu-738, Glu-743, Gly-768, Val-769, His-770, Ser-771, Gln-811, and Glu-823 each contribute to the ATP site. Mg(2+) is bound by residues Gln-811, Glu-823, and Asn-825. Residues Gln-811, Glu-823, and Asn-825 each contribute to the Mn(2+) site. The region spanning 918–1056 is the MGS-like domain; the sequence is NELPIEGNVF…PISHYLSEVE (139 aa). The tract at residues 920–1056 is allosteric domain; the sequence is LPIEGNVFIS…PISHYLSEVE (137 aa).

The protein belongs to the CarB family. In terms of assembly, composed of two chains; the small (or glutamine) chain promotes the hydrolysis of glutamine to ammonia, which is used by the large (or ammonia) chain to synthesize carbamoyl phosphate. Tetramer of heterodimers (alpha,beta)4. Mg(2+) serves as cofactor. Requires Mn(2+) as cofactor.

The catalysed reaction is hydrogencarbonate + L-glutamine + 2 ATP + H2O = carbamoyl phosphate + L-glutamate + 2 ADP + phosphate + 2 H(+). The enzyme catalyses hydrogencarbonate + NH4(+) + 2 ATP = carbamoyl phosphate + 2 ADP + phosphate + 2 H(+). Its pathway is amino-acid biosynthesis; L-arginine biosynthesis; carbamoyl phosphate from bicarbonate: step 1/1. It functions in the pathway pyrimidine metabolism; UMP biosynthesis via de novo pathway; (S)-dihydroorotate from bicarbonate: step 1/3. Functionally, large subunit of the glutamine-dependent carbamoyl phosphate synthetase (CPSase). CPSase catalyzes the formation of carbamoyl phosphate from the ammonia moiety of glutamine, carbonate, and phosphate donated by ATP, constituting the first step of 2 biosynthetic pathways, one leading to arginine and/or urea and the other to pyrimidine nucleotides. The large subunit (synthetase) binds the substrates ammonia (free or transferred from glutamine from the small subunit), hydrogencarbonate and ATP and carries out an ATP-coupled ligase reaction, activating hydrogencarbonate by forming carboxy phosphate which reacts with ammonia to form carbamoyl phosphate. In Methanosphaerula palustris (strain ATCC BAA-1556 / DSM 19958 / E1-9c), this protein is Carbamoyl phosphate synthase large chain.